Consider the following 236-residue polypeptide: Peptidase E (236 aa).

Catalysis depends on charge relay system residues S122, D137, and H159.

Belongs to the peptidase S51 family.

It is found in the cytoplasm. The enzyme catalyses Dipeptidase E catalyzes the hydrolysis of dipeptides Asp-|-Xaa. It does not act on peptides with N-terminal Glu, Asn or Gln, nor does it cleave isoaspartyl peptides.. Functionally, hydrolyzes dipeptides containing N-terminal aspartate residues. May play a role in allowing the cell to use peptide aspartate to spare carbon otherwise required for the synthesis of the aspartate family of amino acids. The polypeptide is Peptidase E (Shewanella putrefaciens (strain CN-32 / ATCC BAA-453)).